The chain runs to 416 residues: D-amino acid dehydrogenase (416 aa).

FAD is bound at residue 3–17 (ITILGSGVIGVTTAY).

Belongs to the DadA oxidoreductase family. It depends on FAD as a cofactor.

The enzyme catalyses a D-alpha-amino acid + A + H2O = a 2-oxocarboxylate + AH2 + NH4(+). It participates in amino-acid degradation; D-alanine degradation; NH(3) and pyruvate from D-alanine: step 1/1. Oxidative deamination of D-amino acids. The polypeptide is D-amino acid dehydrogenase (Brucella abortus (strain S19)).